The chain runs to 365 residues: DNA replication and repair protein RecF (365 aa).

30 to 37 is a binding site for ATP; it reads GQNGSGKT.

The protein belongs to the RecF family.

The protein localises to the cytoplasm. Functionally, the RecF protein is involved in DNA metabolism; it is required for DNA replication and normal SOS inducibility. RecF binds preferentially to single-stranded, linear DNA. It also seems to bind ATP. The sequence is that of DNA replication and repair protein RecF from Shewanella halifaxensis (strain HAW-EB4).